Reading from the N-terminus, the 496-residue chain is Probable cytosol aminopeptidase (496 aa).

The Mn(2+) site is built by K264 and D269. The active site involves K276. 3 residues coordinate Mn(2+): D287, D346, and E348. Residue R350 is part of the active site.

Belongs to the peptidase M17 family. Requires Mn(2+) as cofactor.

It is found in the cytoplasm. It catalyses the reaction Release of an N-terminal amino acid, Xaa-|-Yaa-, in which Xaa is preferably Leu, but may be other amino acids including Pro although not Arg or Lys, and Yaa may be Pro. Amino acid amides and methyl esters are also readily hydrolyzed, but rates on arylamides are exceedingly low.. The enzyme catalyses Release of an N-terminal amino acid, preferentially leucine, but not glutamic or aspartic acids.. Functionally, presumably involved in the processing and regular turnover of intracellular proteins. Catalyzes the removal of unsubstituted N-terminal amino acids from various peptides. This is Probable cytosol aminopeptidase from Geobacter sulfurreducens (strain ATCC 51573 / DSM 12127 / PCA).